A 650-amino-acid chain; its full sequence is MGKIIGIDLGTTNSCVAIMEGNQVKVIENSEGARTTPSIIAYMDDNEVLVGAPAKRQSVTNPKNTLFAVKRLIGRRFEEKEVQKDIGLMPYAIIKADNGDAWVEAHGEKLAPPQVSAEVLRKMKKTAEDYLGEPVTEAVITVPAYFNDSQRQATKDAGRIAGLEVKRIINEPTAAALAFGLDKAEKGDRKIAVYDLGGGTFDVSIIEIADVDGEMQFEVLSTNGDTFLGGEDFDQRIIDYIIGEFKKEQGVDLSKDVLALQRLKEAAEKAKIELSSSQQTEINLPYITADASGPKHLNLKVTRAKLEALVEDLVERTIEPCRTAIKDAGVKVSDIDDVILVGGQTRMPKVQEKVKEFFGKEPRRDVNPDEAVAVGAAIQGQVLSGDRKDVLLLDVTPLSLGIETLGGVMTKMINKNTTIPTKHAQVYSTADDNQGAVTIKVFQGEREMAAGNKLLGEFNLEGIPPAPRGVPQIEVTFDIDANGILHVGAKDKATGKENKITIKANSGLSEAEIEKMVKDAEANAAEDHKLRELAESRNQGDALVHSTKKALTEYGDKLEAGEKEKIEAALKELEDVLKNASSDKAAIDAKVEAVATASQKLGEKMYADMQAQQAGAAGAAGAAAEGASAQGGAQPPDDVVDADFKEVKKD.

A Phosphothreonine; by autocatalysis modification is found at Thr-200. Residues 611–634 (AQQAGAAGAAGAAAEGASAQGGAQ) show a composition bias toward low complexity. The interval 611-650 (AQQAGAAGAAGAAAEGASAQGGAQPPDDVVDADFKEVKKD) is disordered.

This sequence belongs to the heat shock protein 70 family.

Functionally, acts as a chaperone. The sequence is that of Chaperone protein DnaK from Burkholderia pseudomallei (strain 1710b).